The sequence spans 232 residues: 7-cyano-7-deazaguanine synthase (232 aa).

ATP is bound at residue 8-18 (FSGGQDSTTCL). Residues Cys-187, Cys-196, Cys-199, and Cys-202 each coordinate Zn(2+).

The protein belongs to the QueC family. The cofactor is Zn(2+).

It catalyses the reaction 7-carboxy-7-deazaguanine + NH4(+) + ATP = 7-cyano-7-deazaguanine + ADP + phosphate + H2O + H(+). It functions in the pathway purine metabolism; 7-cyano-7-deazaguanine biosynthesis. Functionally, catalyzes the ATP-dependent conversion of 7-carboxy-7-deazaguanine (CDG) to 7-cyano-7-deazaguanine (preQ(0)). This is 7-cyano-7-deazaguanine synthase from Vibrio campbellii (strain ATCC BAA-1116).